The following is a 57-amino-acid chain: Sec-independent protein translocase protein TatA (57 aa).

The chain crosses the membrane as a helical span at residues 1 to 21 (MGISVWQLLIILLIVVMLFGT). The segment at 37–57 (GFRKSVSDGETTTQAEASSRS) is disordered. Polar residues predominate over residues 44-57 (DGETTTQAEASSRS).

The protein belongs to the TatA/E family. In terms of assembly, the Tat system comprises two distinct complexes: a TatABC complex, containing multiple copies of TatA, TatB and TatC subunits, and a separate TatA complex, containing only TatA subunits. Substrates initially bind to the TatABC complex, which probably triggers association of the separate TatA complex to form the active translocon.

It is found in the cell inner membrane. In terms of biological role, part of the twin-arginine translocation (Tat) system that transports large folded proteins containing a characteristic twin-arginine motif in their signal peptide across membranes. TatA could form the protein-conducting channel of the Tat system. The protein is Sec-independent protein translocase protein TatA of Stutzerimonas stutzeri (Pseudomonas stutzeri).